A 379-amino-acid polypeptide reads, in one-letter code: MAYNIWEEYIMANFHNVYPVVTNLFLFIALSYSFCIFVFFSFFFVKMRKVIYFFLIICLHSNVGWHPFFVFFCGVSGLYVKELQVGNYYICNLKDYANETCTVNYDYNKMIKLLCPINKSYEEYDDRYCFKFIGIRDRLVINNQEEPIMDTLPGIIIENLNMFDRYNVGIYMPFYVKEDITIVCTCESSKDSEAITPYLKIHVKANNSFNKEGEFIKGCDYGNNKGKHQFLTNTLKQEENFLCEINANPGEVVGMNCINFEEYTTTTTINNKKKKHQNKNNKNNFDVIQLRPPHCFSNVSISMSFLRVVTMNVNNLLPEAKYYPEVYSFPKDKKFQKYSTISYLWIPENVPHDILFYCHCNFPQGKGIGLFNINKTVES.

An N-terminal signal peptide occupies residues 1 to 33; it reads MAYNIWEEYIMANFHNVYPVVTNLFLFIALSYS. 2 consecutive 6-Cys domains span residues 69–206 and 215–379; these read FVFF…VKAN and FIKG…TVES. 3 disulfides stabilise this stretch: Cys91-Cys101, Cys115-Cys186, and Cys129-Cys184. N-linked (GlcNAc...) asparagine glycans are attached at residues Asn98 and Asn118. A glycan (N-linked (GlcNAc...) asparagine) is linked at Asn206. 3 cysteine pairs are disulfide-bonded: Cys219/Cys243, Cys257/Cys360, and Cys295/Cys358. N-linked (GlcNAc...) asparagine glycans are attached at residues Asn298 and Asn374.

The protein localises to the cell surface. It is found in the cell membrane. Functionally, involved in sporozoite infection of hepatocytes and replication therein. The protein is Sporozoite surface protein P36 (PF36) of Plasmodium falciparum (isolate 3D7).